Consider the following 734-residue polypeptide: Translation initiation factor IF-2 (734 aa).

Residues 39–110 form a disordered region; that stretch reads SKFAPRSSFT…TGKPETKKRE (72 aa). The span at 82–110 shows a compositional bias: basic and acidic residues; that stretch reads DYEKRKLAEQRATRRLKGDTGKPETKKRE. The tr-type G domain occupies 238-405; the sequence is NRPPIVTVMG…SIVLQAEILD (168 aa). The segment at 247–254 is G1; the sequence is GHVDHGKT. Position 247-254 (247-254) interacts with GTP; it reads GHVDHGKT. The interval 272-276 is G2; sequence GITQH. The G3 stretch occupies residues 293 to 296; that stretch reads DTPG. GTP-binding positions include 293–297 and 347–350; these read DTPGH and NKCD. The G4 stretch occupies residues 347–350; it reads NKCD. Positions 383–385 are G5; it reads SAK.

It belongs to the TRAFAC class translation factor GTPase superfamily. Classic translation factor GTPase family. IF-2 subfamily.

Its subcellular location is the cytoplasm. One of the essential components for the initiation of protein synthesis. Protects formylmethionyl-tRNA from spontaneous hydrolysis and promotes its binding to the 30S ribosomal subunits. Also involved in the hydrolysis of GTP during the formation of the 70S ribosomal complex. The sequence is that of Translation initiation factor IF-2 from Pelagibacter ubique (strain HTCC1062).